Reading from the N-terminus, the 634-residue chain is Replication protein E1 (634 aa).

The Nuclear localization signal signature appears at 85-87 (KRK). Ser91 and Ser95 each carry phosphoserine; by host. Residues 92-117 (PRSSPLGDITNQNNTHSHSQANESQV) are disordered. The span at 100–115 (ITNQNNTHSHSQANES) shows a compositional bias: polar residues. Residues 172–338 (CANVELNSIC…QTQLQHSFED (167 aa)) are DNA-binding region. One can recognise an SF3 helicase domain in the interval 437 to 587 (VNFMSFIQMF…FPFDNNGNAV (151 aa)). 463 to 470 (GPPNTGKS) provides a ligand contact to ATP.

This sequence belongs to the papillomaviridae E1 protein family. Can form hexamers. Interacts with E2 protein; this interaction increases E1 DNA binding specificity. Interacts with host DNA polymerase subunit POLA2. Interacts with host single stranded DNA-binding protein RPA1. Interacts with host TOP1; this interaction stimulates the enzymatic activity of TOP1. In terms of processing, phosphorylated.

The protein resides in the host nucleus. The catalysed reaction is Couples ATP hydrolysis with the unwinding of duplex DNA by translocating in the 3'-5' direction.. It carries out the reaction ATP + H2O = ADP + phosphate + H(+). Its function is as follows. ATP-dependent DNA 3'-5' helicase required for initiation of viral DNA replication. It forms a complex with the viral E2 protein. The E1-E2 complex binds to the replication origin which contains binding sites for both proteins. During the initial step, a dimer of E1 interacts with a dimer of protein E2 leading to a complex that binds the viral origin of replication with high specificity. Then, a second dimer of E1 displaces the E2 dimer in an ATP-dependent manner to form the E1 tetramer. Following this, two E1 monomers are added to each half of the site, which results in the formation of two E1 trimers on the viral ori. Subsequently, two hexamers will be created. The double hexamer acts as a bi-directional helicase machinery and unwinds the viral DNA and then recruits the host DNA polymerase to start replication. The sequence is that of Replication protein E1 from Homo sapiens (Human).